A 70-amino-acid polypeptide reads, in one-letter code: Cytochrome c oxidase subunit 8B, mitochondrial (70 aa).

Residues 1–24 (MSRLAPPLRLLQAPLKCWAVPKAH) constitute a mitochondrion transit peptide. The Mitochondrial matrix segment spans residues 25-35 (VSAKPARTPTS). The helical transmembrane segment at 36-59 (PMEQAVGLSVMFVSFLVPSGWVLS) threads the bilayer. Residues 60–70 (HLESYKKSSTT) lie on the Mitochondrial intermembrane side of the membrane.

Belongs to the cytochrome c oxidase VIII family. As to quaternary structure, component of the cytochrome c oxidase (complex IV, CIV), a multisubunit enzyme composed of 14 subunits. The complex is composed of a catalytic core of 3 subunits MT-CO1, MT-CO2 and MT-CO3, encoded in the mitochondrial DNA, and 11 supernumerary subunits COX4I, COX5A, COX5B, COX6A, COX6B, COX6C, COX7A, COX7B, COX7C, COX8 and NDUFA4, which are encoded in the nuclear genome. The complex exists as a monomer or a dimer and forms supercomplexes (SCs) in the inner mitochondrial membrane with NADH-ubiquinone oxidoreductase (complex I, CI) and ubiquinol-cytochrome c oxidoreductase (cytochrome b-c1 complex, complex III, CIII), resulting in different assemblies (supercomplex SCI(1)III(2)IV(1) and megacomplex MCI(2)III(2)IV(2)).

Its subcellular location is the mitochondrion inner membrane. It functions in the pathway energy metabolism; oxidative phosphorylation. In terms of biological role, component of the cytochrome c oxidase, the last enzyme in the mitochondrial electron transport chain which drives oxidative phosphorylation. The respiratory chain contains 3 multisubunit complexes succinate dehydrogenase (complex II, CII), ubiquinol-cytochrome c oxidoreductase (cytochrome b-c1 complex, complex III, CIII) and cytochrome c oxidase (complex IV, CIV), that cooperate to transfer electrons derived from NADH and succinate to molecular oxygen, creating an electrochemical gradient over the inner membrane that drives transmembrane transport and the ATP synthase. Cytochrome c oxidase is the component of the respiratory chain that catalyzes the reduction of oxygen to water. Electrons originating from reduced cytochrome c in the intermembrane space (IMS) are transferred via the dinuclear copper A center (CU(A)) of subunit 2 and heme A of subunit 1 to the active site in subunit 1, a binuclear center (BNC) formed by heme A3 and copper B (CU(B)). The BNC reduces molecular oxygen to 2 water molecules using 4 electrons from cytochrome c in the IMS and 4 protons from the mitochondrial matrix. This is Cytochrome c oxidase subunit 8B, mitochondrial (COX8B) from Carlito syrichta (Philippine tarsier).